Here is an 853-residue protein sequence, read N- to C-terminus: Eukaryotic translation initiation factor 3 subunit C (853 aa).

Residues 1–78 (MSRFFAASDS…EDEDQNKVLK (78 aa)) are disordered. Over residues 11 to 46 (SSEESSEEELYSDNEASAQEDSDKDSDDDDSDDDDS) the composition is skewed to acidic residues. The region spanning 599–773 (FHMHINLELL…SAIIFRKGVE (175 aa)) is the PCI domain. A disordered region spans residues 798–853 (TLEQRTQGTANAFERQGGRGGRGGGRGRGGGRGGGVPRGGRNQQFTGGALGRAIQA). Gly residues predominate over residues 815–835 (GRGGRGGGRGRGGGRGGGVPR).

It belongs to the eIF-3 subunit C family. Component of the eukaryotic translation initiation factor 3 (eIF-3) complex.

It localises to the cytoplasm. Functionally, component of the eukaryotic translation initiation factor 3 (eIF-3) complex, which is involved in protein synthesis of a specialized repertoire of mRNAs and, together with other initiation factors, stimulates binding of mRNA and methionyl-tRNAi to the 40S ribosome. The eIF-3 complex specifically targets and initiates translation of a subset of mRNAs involved in cell proliferation. This Phaeosphaeria nodorum (strain SN15 / ATCC MYA-4574 / FGSC 10173) (Glume blotch fungus) protein is Eukaryotic translation initiation factor 3 subunit C.